The sequence spans 272 residues: Aquaporin FA-CHIP (272 aa).

The Cytoplasmic portion of the chain corresponds to 1 to 17; that stretch reads MASEFKKKAFWRAVIAE. The helical transmembrane segment at 18–35 threads the bilayer; the sequence is FLAMILFVFISIGAALGF. The Extracellular segment spans residues 36–52; sequence NFPIEEKANQTVGRSQD. N44 is a glycosylation site (N-linked (GlcNAc...) asparagine). A helical membrane pass occupies residues 53 to 71; sequence IVKVSLAFGISIATMAQSV. Residues 72–97 lie on the Cytoplasmic side of the membrane; that stretch reads GHVSGAHLNPAVTLGCLLSCQISILK. The NPA 1 signature appears at 80-82; it reads NPA. Residues 98 to 119 traverse the membrane as a helical segment; sequence AVMYIIAQCLGAVVATAILSGI. The Extracellular portion of the chain corresponds to 120–139; that stretch reads TSGLENNSLGLNGLSPGVSA. N-linked (GlcNAc...) asparagine glycosylation occurs at N125. The helical transmembrane segment at 140–160 threads the bilayer; it reads GQGLGVEILVTFQLVLCVVAV. Residues 161–168 lie on the Cytoplasmic side of the membrane; sequence TDRRRHDV. Residues 169–188 form a helical membrane-spanning segment; it reads SGSVPLAIGLSVALGHLIAI. At 189–214 the chain is on the extracellular side; the sequence is DYTGCGMNPARSFGSAVLTKNFTYHW. Positions 196–198 match the NPA 2 motif; it reads NPA. N209 is a glycosylation site (N-linked (GlcNAc...) asparagine). The helical transmembrane segment at 215-236 threads the bilayer; sequence IFWVGPMIGGAAAAIIYDFILA. Over 237–272 the chain is Cytoplasmic; sequence PRTSDLTDRMKVWTNGQVEEYELDGDDNTRVEMKPK.

The protein belongs to the MIP/aquaporin (TC 1.A.8) family.

It is found in the membrane. Functionally, forms a water-specific channel. The sequence is that of Aquaporin FA-CHIP (AQPA) from Pelophylax lessonae (Pool frog).